Here is a 482-residue protein sequence, read N- to C-terminus: Hydroxymethylglutaryl-CoA synthase A (482 aa).

Catalysis depends on Glu85, which acts as the Proton donor/acceptor. The active-site Acyl-thioester intermediate is Cys119. (3S)-3-hydroxy-3-methylglutaryl-CoA contacts are provided by Cys119, Thr161, Ser211, His249, Lys258, Asn325, and Ser358. His249 serves as the catalytic Proton donor/acceptor.

This sequence belongs to the thiolase-like superfamily. HMG-CoA synthase family.

The enzyme catalyses acetoacetyl-CoA + acetyl-CoA + H2O = (3S)-3-hydroxy-3-methylglutaryl-CoA + CoA + H(+). It participates in metabolic intermediate biosynthesis; (R)-mevalonate biosynthesis; (R)-mevalonate from acetyl-CoA: step 2/3. Its function is as follows. Condenses acetyl-CoA with acetoacetyl-CoA to form HMG-CoA, which is the substrate for HMG-CoA reductase. The protein is Hydroxymethylglutaryl-CoA synthase A (hgsA) of Dictyostelium discoideum (Social amoeba).